The chain runs to 111 residues: UPF0060 membrane protein NFA_36830 (111 aa).

Helical transmembrane passes span leucine 7–glycine 27, glycine 33–phenylalanine 53, valine 62–aspartate 82, and leucine 91–glycine 111.

This sequence belongs to the UPF0060 family.

The protein resides in the cell membrane. This Nocardia farcinica (strain IFM 10152) protein is UPF0060 membrane protein NFA_36830.